Here is a 299-residue protein sequence, read N- to C-terminus: S-methyl-5'-thioadenosine phosphorylase (299 aa).

Phosphate is bound by residues Ser-14, 56–57 (RH), and 89–90 (SA). Met-191 provides a ligand contact to substrate. Thr-192 provides a ligand contact to phosphate. A substrate-binding site is contributed by 215-217 (DYD).

The protein belongs to the PNP/MTAP phosphorylase family. MTAP subfamily. As to quaternary structure, homohexamer. Dimer of a homotrimer.

It carries out the reaction S-methyl-5'-thioadenosine + phosphate = 5-(methylsulfanyl)-alpha-D-ribose 1-phosphate + adenine. It participates in amino-acid biosynthesis; L-methionine biosynthesis via salvage pathway; S-methyl-5-thio-alpha-D-ribose 1-phosphate from S-methyl-5'-thioadenosine (phosphorylase route): step 1/1. In terms of biological role, catalyzes the reversible phosphorylation of S-methyl-5'-thioadenosine (MTA) to adenine and 5-methylthioribose-1-phosphate. Involved in the breakdown of MTA, a major by-product of polyamine biosynthesis. Responsible for the first step in the methionine salvage pathway after MTA has been generated from S-adenosylmethionine. Has broad substrate specificity with 6-aminopurine nucleosides as preferred substrates. This is S-methyl-5'-thioadenosine phosphorylase from Gloeobacter violaceus (strain ATCC 29082 / PCC 7421).